The following is a 502-amino-acid chain: Glycerol kinase (502 aa).

Threonine 14 is a binding site for ADP. 3 residues coordinate ATP: threonine 14, threonine 15, and serine 16. Position 14 (threonine 14) interacts with sn-glycerol 3-phosphate. Arginine 18 serves as a coordination point for ADP. The sn-glycerol 3-phosphate site is built by arginine 84, glutamate 85, tyrosine 136, and aspartate 246. Glycerol contacts are provided by arginine 84, glutamate 85, tyrosine 136, aspartate 246, and glutamine 247. ADP-binding residues include threonine 268 and glycine 311. ATP is bound by residues threonine 268, glycine 311, glutamine 315, and glycine 412. Positions 412 and 416 each coordinate ADP.

It belongs to the FGGY kinase family. Homotetramer and homodimer (in equilibrium). Heterodimer with EIIA-Glc. Binds 1 zinc ion per glycerol kinase EIIA-Glc dimer. The zinc ion is important for dimerization.

The catalysed reaction is glycerol + ATP = sn-glycerol 3-phosphate + ADP + H(+). Its pathway is polyol metabolism; glycerol degradation via glycerol kinase pathway; sn-glycerol 3-phosphate from glycerol: step 1/1. With respect to regulation, activity of this regulatory enzyme is affected by several metabolites. Allosterically and non-competitively inhibited by fructose 1,6-bisphosphate (FBP) and unphosphorylated phosphocarrier protein EIIA-Glc (III-Glc), an integral component of the bacterial phosphotransferase (PTS) system. In terms of biological role, key enzyme in the regulation of glycerol uptake and metabolism. Catalyzes the phosphorylation of glycerol to yield sn-glycerol 3-phosphate. This chain is Glycerol kinase, found in Escherichia fergusonii (strain ATCC 35469 / DSM 13698 / CCUG 18766 / IAM 14443 / JCM 21226 / LMG 7866 / NBRC 102419 / NCTC 12128 / CDC 0568-73).